Reading from the N-terminus, the 351-residue chain is Methylthioribose-1-phosphate isomerase (351 aa).

Residues 51–53 (RGA), arginine 94, and glutamine 199 contribute to the substrate site. Residue aspartate 240 is the Proton donor of the active site. Position 250–251 (250–251 (NK)) interacts with substrate.

Belongs to the EIF-2B alpha/beta/delta subunits family. MtnA subfamily. Homodimer.

The enzyme catalyses 5-(methylsulfanyl)-alpha-D-ribose 1-phosphate = 5-(methylsulfanyl)-D-ribulose 1-phosphate. The protein operates within amino-acid biosynthesis; L-methionine biosynthesis via salvage pathway; L-methionine from S-methyl-5-thio-alpha-D-ribose 1-phosphate: step 1/6. Catalyzes the interconversion of methylthioribose-1-phosphate (MTR-1-P) into methylthioribulose-1-phosphate (MTRu-1-P). This is Methylthioribose-1-phosphate isomerase from Bacillus thuringiensis subsp. konkukian (strain 97-27).